The chain runs to 392 residues: Phosphoglycerate kinase (392 aa).

Substrate is bound by residues aspartate 21–asparagine 23, arginine 36, histidine 59–arginine 62, arginine 114, and arginine 147. Residues lysine 198, glutamate 320, and glycine 346–threonine 349 each bind ATP.

Belongs to the phosphoglycerate kinase family. In terms of assembly, monomer.

The protein resides in the cytoplasm. The catalysed reaction is (2R)-3-phosphoglycerate + ATP = (2R)-3-phospho-glyceroyl phosphate + ADP. It participates in carbohydrate degradation; glycolysis; pyruvate from D-glyceraldehyde 3-phosphate: step 2/5. In Neisseria meningitidis serogroup C / serotype 2a (strain ATCC 700532 / DSM 15464 / FAM18), this protein is Phosphoglycerate kinase.